We begin with the raw amino-acid sequence, 102 residues long: NADH-quinone oxidoreductase subunit K (102 aa).

A run of 3 helical transmembrane segments spans residues 5–25 (LGHF…GIFL), 31–51 (IVLL…FVAF), and 62–82 (VFVF…LAIL).

This sequence belongs to the complex I subunit 4L family. As to quaternary structure, NDH-1 is composed of 14 different subunits. Subunits NuoA, H, J, K, L, M, N constitute the membrane sector of the complex.

It localises to the cell inner membrane. It carries out the reaction a quinone + NADH + 5 H(+)(in) = a quinol + NAD(+) + 4 H(+)(out). Its function is as follows. NDH-1 shuttles electrons from NADH, via FMN and iron-sulfur (Fe-S) centers, to quinones in the respiratory chain. The immediate electron acceptor for the enzyme in this species is believed to be ubiquinone. Couples the redox reaction to proton translocation (for every two electrons transferred, four hydrogen ions are translocated across the cytoplasmic membrane), and thus conserves the redox energy in a proton gradient. In Paracidovorax citrulli (strain AAC00-1) (Acidovorax citrulli), this protein is NADH-quinone oxidoreductase subunit K.